A 248-amino-acid chain; its full sequence is Ubiquinone/menaquinone biosynthesis C-methyltransferase UbiE (248 aa).

Ser-68 and Asp-92 together coordinate S-adenosyl-L-methionine.

Belongs to the class I-like SAM-binding methyltransferase superfamily. MenG/UbiE family.

It catalyses the reaction a 2-demethylmenaquinol + S-adenosyl-L-methionine = a menaquinol + S-adenosyl-L-homocysteine + H(+). It carries out the reaction a 2-methoxy-6-(all-trans-polyprenyl)benzene-1,4-diol + S-adenosyl-L-methionine = a 5-methoxy-2-methyl-3-(all-trans-polyprenyl)benzene-1,4-diol + S-adenosyl-L-homocysteine + H(+). It functions in the pathway quinol/quinone metabolism; menaquinone biosynthesis; menaquinol from 1,4-dihydroxy-2-naphthoate: step 2/2. Its pathway is cofactor biosynthesis; ubiquinone biosynthesis. Methyltransferase required for the conversion of demethylmenaquinol (DMKH2) to menaquinol (MKH2) and the conversion of 2-polyprenyl-6-methoxy-1,4-benzoquinol (DDMQH2) to 2-polyprenyl-3-methyl-6-methoxy-1,4-benzoquinol (DMQH2). The protein is Ubiquinone/menaquinone biosynthesis C-methyltransferase UbiE of Rickettsia felis (strain ATCC VR-1525 / URRWXCal2) (Rickettsia azadi).